Consider the following 359-residue polypeptide: UDP-N-acetylglucosamine--N-acetylmuramyl-(pentapeptide) pyrophosphoryl-undecaprenol N-acetylglucosamine transferase (359 aa).

UDP-N-acetyl-alpha-D-glucosamine-binding positions include 15 to 17 (TGG), Asn-127, Arg-166, Ser-191, Ile-245, 264 to 269 (ALTVSE), and Gln-290.

Belongs to the glycosyltransferase 28 family. MurG subfamily.

The protein localises to the cell inner membrane. It carries out the reaction di-trans,octa-cis-undecaprenyl diphospho-N-acetyl-alpha-D-muramoyl-L-alanyl-D-glutamyl-meso-2,6-diaminopimeloyl-D-alanyl-D-alanine + UDP-N-acetyl-alpha-D-glucosamine = di-trans,octa-cis-undecaprenyl diphospho-[N-acetyl-alpha-D-glucosaminyl-(1-&gt;4)]-N-acetyl-alpha-D-muramoyl-L-alanyl-D-glutamyl-meso-2,6-diaminopimeloyl-D-alanyl-D-alanine + UDP + H(+). It participates in cell wall biogenesis; peptidoglycan biosynthesis. Functionally, cell wall formation. Catalyzes the transfer of a GlcNAc subunit on undecaprenyl-pyrophosphoryl-MurNAc-pentapeptide (lipid intermediate I) to form undecaprenyl-pyrophosphoryl-MurNAc-(pentapeptide)GlcNAc (lipid intermediate II). The chain is UDP-N-acetylglucosamine--N-acetylmuramyl-(pentapeptide) pyrophosphoryl-undecaprenol N-acetylglucosamine transferase from Pseudomonas putida (strain GB-1).